Consider the following 359-residue polypeptide: Membrane-bound lytic murein transglycosylase C (359 aa).

Residues 1-16 form the signal peptide; sequence MKKYLALALIAPLLIS. Cys-17 is lipidated: N-palmitoyl cysteine. Cys-17 carries S-diacylglycerol cysteine lipidation.

The protein belongs to the transglycosylase Slt family.

Its subcellular location is the cell outer membrane. It carries out the reaction Exolytic cleavage of the (1-&gt;4)-beta-glycosidic linkage between N-acetylmuramic acid (MurNAc) and N-acetylglucosamine (GlcNAc) residues in peptidoglycan, from either the reducing or the non-reducing ends of the peptidoglycan chains, with concomitant formation of a 1,6-anhydrobond in the MurNAc residue.. In terms of biological role, murein-degrading enzyme. May play a role in recycling of muropeptides during cell elongation and/or cell division. The protein is Membrane-bound lytic murein transglycosylase C of Shigella flexneri serotype 5b (strain 8401).